Consider the following 201-residue polypeptide: uncharacterized protein (201 aa).

The N-terminal stretch at Met1–Gly19 is a signal peptide.

This is an uncharacterized protein from Acheta domesticus (House cricket).